The primary structure comprises 401 residues: Adaptive-response sensory kinase SasA (401 aa).

The region spanning 175–400 (MLVHDLRNPL…WFHFTLPVYP (226 aa)) is the Histidine kinase domain. At histidine 178 the chain carries Phosphohistidine; by autocatalysis.

Homooligomerizes. Interacts with KaiC. Participates in the KaiABC clock complex, whose core is composed of a KaiC homohexamer, 6 KaiB and up to 6 KaiA dimers. SasA and KaiB(fs) compete to bind to KaiC.

The catalysed reaction is ATP + protein L-histidine = ADP + protein N-phospho-L-histidine.. In terms of biological role, member of the two-component regulatory system SasA/RpaA involved in genome-wide circadian gene expression. One of several clock output pathways. Participates in the Kai clock protein complex, the main circadian regulator in cyanobacteria, via its interaction with KaiC. KaiC enhances the autophosphorylation activity of SasA, which then transfers its phosphate group to RpaA to activate it. In addition to its output function, recruits fold-shifted KaiB (KaiB(fs)) to KaiC to cooperatively form the KaiB(6):KaiC(6) complex (independent of SasA kinase activity). Required for robustness of the circadian rhythm of gene expression and is involved in clock output, also required for adaptation to light/dark cycles. The chain is Adaptive-response sensory kinase SasA from Trichormus variabilis (strain ATCC 29413 / PCC 7937) (Anabaena variabilis).